We begin with the raw amino-acid sequence, 316 residues long: Ecto-ADP-ribosyltransferase 5 (316 aa).

The signal sequence occupies residues 1 to 23 (MIQATLLISLSCLSFYTLGSGVR). An intrachain disulfide couples Cys-50 to Cys-266. Asn-68 carries N-linked (GlcNAc...) asparagine glycosylation. Positions 70–261 (TRLRESWETA…MTLSSSDQMC (192 aa)) constitute a TR mART core domain. Tyr-107 contacts NAD(+). An N-linked (GlcNAc...) asparagine glycan is attached at Asn-109. Arg-168 and Gln-188 together coordinate NAD(+). Arg-168 is a catalytic residue. Ser-191 is a catalytic residue. Ser-222 is a binding site for NAD(+). Glu-229 is an active-site residue. N-linked (GlcNAc...) asparagine glycans are attached at residues Asn-242 and Asn-248.

The protein belongs to the Arg-specific ADP-ribosyltransferase family.

The protein localises to the secreted. It is found in the membrane. It catalyses the reaction L-arginyl-[protein] + NAD(+) = N(omega)-(ADP-D-ribosyl)-L-arginyl-[protein] + nicotinamide + H(+). The chain is Ecto-ADP-ribosyltransferase 5 (ART5) from Bos taurus (Bovine).